Here is a 227-residue protein sequence, read N- to C-terminus: ATP synthase F(0) complex subunit a (227 aa).

The next 6 membrane-spanning stretches (helical) occupy residues 14-34 (LLGH…FPSP), 69-89 (WALM…LGLL), 98-118 (QLSM…LTGL), 139-159 (IPAL…ALGV), 167-187 (AGHL…PILP), and 190-210 (SILT…VAMI).

It belongs to the ATPase A chain family. In terms of assembly, component of the ATP synthase complex composed at least of ATP5F1A/subunit alpha, ATP5F1B/subunit beta, ATP5MC1/subunit c (homooctomer), MT-ATP6/subunit a, MT-ATP8/subunit 8, ATP5ME/subunit e, ATP5MF/subunit f, ATP5MG/subunit g, ATP5MK/subunit k, ATP5MJ/subunit j, ATP5F1C/subunit gamma, ATP5F1D/subunit delta, ATP5F1E/subunit epsilon, ATP5PF/subunit F6, ATP5PB/subunit b, ATP5PD/subunit d, ATP5PO/subunit OSCP. ATP synthase complex consists of a soluble F(1) head domain (subunits alpha(3) and beta(3)) - the catalytic core - and a membrane F(0) domain - the membrane proton channel (subunits c, a, 8, e, f, g, k and j). These two domains are linked by a central stalk (subunits gamma, delta, and epsilon) rotating inside the F1 region and a stationary peripheral stalk (subunits F6, b, d, and OSCP). Interacts with DNAJC30; interaction is direct.

It localises to the mitochondrion inner membrane. The catalysed reaction is H(+)(in) = H(+)(out). In terms of biological role, subunit a, of the mitochondrial membrane ATP synthase complex (F(1)F(0) ATP synthase or Complex V) that produces ATP from ADP in the presence of a proton gradient across the membrane which is generated by electron transport complexes of the respiratory chain. ATP synthase complex consist of a soluble F(1) head domain - the catalytic core - and a membrane F(1) domain - the membrane proton channel. These two domains are linked by a central stalk rotating inside the F(1) region and a stationary peripheral stalk. During catalysis, ATP synthesis in the catalytic domain of F(1) is coupled via a rotary mechanism of the central stalk subunits to proton translocation. With the subunit c (ATP5MC1), forms the proton-conducting channel in the F(0) domain, that contains two crucial half-channels (inlet and outlet) that facilitate proton movement from the mitochondrial intermembrane space (IMS) into the matrix. Protons are taken up via the inlet half-channel and released through the outlet half-channel, following a Grotthuss mechanism. The chain is ATP synthase F(0) complex subunit a from Anas platyrhynchos (Mallard).